The chain runs to 977 residues: uncharacterized protein (977 aa).

Residues 100-152 (ATSPLQQNGKSRDTEKPPSMKEKDLSSNSSSQHDKAFHERVDQGKNKSSTTKY) form a disordered region. 2 stretches are compositionally biased toward basic and acidic residues: residues 109–124 (KSRDTEKPPSMKEKDL) and 131–144 (QHDKAFHERVDQGK). Ser165 carries the phosphoserine modification. 2 stretches are compositionally biased toward polar residues: residues 166-175 (PGQSVNSLKP) and 183-193 (STKSSTSSEMH). Positions 166–194 (PGQSVNSLKPNSGDEVPSTKSSTSSEMHT) are disordered.

This is an uncharacterized protein from Schizosaccharomyces pombe (strain 972 / ATCC 24843) (Fission yeast).